We begin with the raw amino-acid sequence, 259 residues long: Deoxyribose-phosphate aldolase (259 aa).

Residue D102 is the Proton donor/acceptor of the active site. K167 functions as the Schiff-base intermediate with acetaldehyde in the catalytic mechanism. Catalysis depends on K201, which acts as the Proton donor/acceptor.

The protein belongs to the DeoC/FbaB aldolase family. DeoC type 2 subfamily.

Its subcellular location is the cytoplasm. It carries out the reaction 2-deoxy-D-ribose 5-phosphate = D-glyceraldehyde 3-phosphate + acetaldehyde. Its pathway is carbohydrate degradation; 2-deoxy-D-ribose 1-phosphate degradation; D-glyceraldehyde 3-phosphate and acetaldehyde from 2-deoxy-alpha-D-ribose 1-phosphate: step 2/2. Functionally, catalyzes a reversible aldol reaction between acetaldehyde and D-glyceraldehyde 3-phosphate to generate 2-deoxy-D-ribose 5-phosphate. This chain is Deoxyribose-phosphate aldolase, found in Shigella boydii serotype 4 (strain Sb227).